The following is a 276-amino-acid chain: NAD-capped RNA hydrolase NudC (276 aa).

Residue Arg-82 participates in substrate binding. Zn(2+) contacts are provided by Cys-112 and Cys-115. A substrate-binding site is contributed by Glu-125. Cys-130 and Cys-133 together coordinate Zn(2+). Tyr-138 provides a ligand contact to substrate. The Nudix hydrolase domain occupies 139-262 (PRISPSMIVL…SIARYLIDLY (124 aa)). A divalent metal cation-binding residues include Ala-172, Glu-188, and Glu-192. A Nudix box motif is present at residues 173–194 (GFAEPGESAEDCLVREVREEVA). 206 to 213 (QCWPFPHS) provides a ligand contact to substrate. Residue Glu-233 participates in a divalent metal cation binding. Ala-255 lines the substrate pocket.

It belongs to the Nudix hydrolase family. NudC subfamily. In terms of assembly, homodimer. Mg(2+) serves as cofactor. The cofactor is Mn(2+). Zn(2+) is required as a cofactor.

It catalyses the reaction a 5'-end NAD(+)-phospho-ribonucleoside in mRNA + H2O = a 5'-end phospho-adenosine-phospho-ribonucleoside in mRNA + beta-nicotinamide D-ribonucleotide + 2 H(+). It carries out the reaction NAD(+) + H2O = beta-nicotinamide D-ribonucleotide + AMP + 2 H(+). The enzyme catalyses NADH + H2O = reduced beta-nicotinamide D-ribonucleotide + AMP + 2 H(+). Its function is as follows. mRNA decapping enzyme that specifically removes the nicotinamide adenine dinucleotide (NAD) cap from a subset of mRNAs by hydrolyzing the diphosphate linkage to produce nicotinamide mononucleotide (NMN) and 5' monophosphate mRNA. The NAD-cap is present at the 5'-end of some mRNAs and stabilizes RNA against 5'-processing. Has preference for mRNAs with a 5'-end purine. Catalyzes the hydrolysis of a broad range of dinucleotide pyrophosphates. The sequence is that of NAD-capped RNA hydrolase NudC from Pseudomonas putida (strain W619).